Here is a 177-residue protein sequence, read N- to C-terminus: MTIKSRIRSIPDYPKKGIMFRDITTLIKDPVGFRLVIDNLTQHYLQNGVDFDVIVGIEARGFIIGGALSYALGKGFVPVRKPGKLPADVASQKYELEYGSDTIEIHIDALEEGSRVLLVDDLLATGGTALAAAALVEKVGGVVAEMAFIVNLPDVGGEQRILDKGYSIFSLTDFEGD.

This sequence belongs to the purine/pyrimidine phosphoribosyltransferase family. Homodimer.

It is found in the cytoplasm. It carries out the reaction AMP + diphosphate = 5-phospho-alpha-D-ribose 1-diphosphate + adenine. Its pathway is purine metabolism; AMP biosynthesis via salvage pathway; AMP from adenine: step 1/1. Its function is as follows. Catalyzes a salvage reaction resulting in the formation of AMP, that is energically less costly than de novo synthesis. This chain is Adenine phosphoribosyltransferase, found in Chlorobium phaeobacteroides (strain DSM 266 / SMG 266 / 2430).